A 641-amino-acid polypeptide reads, in one-letter code: Bilirubin reductase (641 aa).

Gln96 serves as a coordination point for FMN. Arg167 (proton donor) is an active-site residue. Residues Lys214, Arg295, and 317-318 contribute to the FMN site; that span reads GR. Residues Cys341, Cys344, Cys348, and Cys360 each contribute to the [4Fe-4S] cluster site. Ala391, Glu410, Gln418, Lys428, and Ala455 together coordinate FAD.

It in the N-terminal section; belongs to the NADH:flavin oxidoreductase/NADH oxidase family. It depends on FAD as a cofactor. The cofactor is FMN. [4Fe-4S] cluster is required as a cofactor.

It carries out the reaction urobilinogen + 4 A = (4Z,15Z)-bilirubin IXalpha + 4 AH2. It catalyses the reaction urobilinogen + 2 A = (4Z,15Z)-mesobilirubin IXalpha + 2 AH2. The protein operates within porphyrin-containing compound metabolism; protoheme degradation. Its function is as follows. Bilirubin reductase that catalyzes reduction of mesobilirubin and/or bilirubin to urobilinogen, a key step during heme degradation. Urobilinogen then spontaneously degrades into urobilin, which gives urine its distinctive yellow color. This chain is Bilirubin reductase, found in Mediterraneibacter gnavus (strain CC55_001C).